Here is a 148-residue protein sequence, read N- to C-terminus: Phosphoribosyl-AMP cyclohydrolase (148 aa).

Mg(2+) is bound at residue aspartate 91. Cysteine 92 is a binding site for Zn(2+). Residues aspartate 93 and aspartate 95 each coordinate Mg(2+). Residues cysteine 109 and cysteine 116 each coordinate Zn(2+).

The protein belongs to the PRA-CH family. As to quaternary structure, homodimer. Mg(2+) serves as cofactor. Zn(2+) is required as a cofactor.

It localises to the cytoplasm. It catalyses the reaction 1-(5-phospho-beta-D-ribosyl)-5'-AMP + H2O = 1-(5-phospho-beta-D-ribosyl)-5-[(5-phospho-beta-D-ribosylamino)methylideneamino]imidazole-4-carboxamide. It functions in the pathway amino-acid biosynthesis; L-histidine biosynthesis; L-histidine from 5-phospho-alpha-D-ribose 1-diphosphate: step 3/9. Catalyzes the hydrolysis of the adenine ring of phosphoribosyl-AMP. The protein is Phosphoribosyl-AMP cyclohydrolase of Rhodopseudomonas palustris (strain HaA2).